Here is a 474-residue protein sequence, read N- to C-terminus: MWTVQNRESLGLLSFPVMITMVCCAHSTNEPSNMSYVKETVDRLLKGYDIRLRPDFGGPPVDVGMRIDVASIDMVSEVNMDYTLTMYFQQSWKDKRLSYSGIPLNLTLDNRVADQLWVPDTYFLNDKKSFVHGVTVKNRMIRLHPDGTVLYGLRITTTAACMMDLRRYPLDEQNCTLEIESYGYTTDDIEFYWNGGEGAVTGVNKIELPQFSIVDYKMVSKKVEFTTGAYPRLSLSFRLKRNIGYFILQTYMPSTLITILSWVSFWINYDASAARVALGITTVLTMTTISTHLRETLPKIPYVKAIDIYLMGCFVFVFLALLEYAFVNYIFFGKGPQKKGASKQDQSANEKNKLEMNKVQVDAHGNILLSTLEIRNETSGSEVLTSVSDPKATMYSYDSASIQYRKPLSSREAYGRALDRHGVPSKGRIRRRASQLKVKIPDLTDVNSIDKWSRMFFPITFSLFNVVYWLYYVH.

The signal sequence occupies residues 1–25; the sequence is MWTVQNRESLGLLSFPVMITMVCCA. The Extracellular portion of the chain corresponds to 26-245; that stretch reads HSTNEPSNMS…SFRLKRNIGY (220 aa). N-linked (GlcNAc...) asparagine glycosylation is present at Asn105. Tyr122 serves as a coordination point for histamine. Residues Cys161 and Cys175 are joined by a disulfide bond. Asn174 carries N-linked (GlcNAc...) asparagine glycosylation. Residues 181 to 182 and Thr227 each bind histamine; that span reads SY. Positions 182 and 227 each coordinate 4-aminobutanoate. Helical transmembrane passes span 246 to 267, 271 to 293, and 305 to 327; these read FILQTYMPSTLITILSWVSFWI, ASAARVALGITTVLTMTTISTHL, and AIDIYLMGCFVFVFLALLEYAFV. Residues 328 to 451 lie on the Cytoplasmic side of the membrane; it reads NYIFFGKGPQ…DLTDVNSIDK (124 aa). The chain crosses the membrane as a helical span at residues 452–473; the sequence is WSRMFFPITFSLFNVVYWLYYV.

Belongs to the ligand-gated ion channel (TC 1.A.9) family. Gamma-aminobutyric acid receptor (TC 1.A.9.5) subfamily. GABRB1 sub-subfamily. Heteropentamer, formed by a combination of alpha (GABRA1-6), beta (GABRB1-3), gamma (GABRG1-3), delta (GABRD), epsilon (GABRE), rho (GABRR1-3), pi (GABRP) and theta (GABRQ) chains, each subunit exhibiting distinct physiological and pharmacological properties. Binds UBQLN1.

It localises to the postsynaptic cell membrane. Its subcellular location is the cell membrane. The catalysed reaction is chloride(in) = chloride(out). Potentiated by etomidate, propofol, pregnanolone and flurazepam. Potentiated by histamine. Functionally, beta subunit of the heteropentameric ligand-gated chloride channel gated by gamma-aminobutyric acid (GABA), a major inhibitory neurotransmitter in the brain. GABA-gated chloride channels, also named GABA(A) receptors (GABAAR), consist of five subunits arranged around a central pore and contain one or two GABA active binding sites located at the alpha and beta subunit interfaces, depending on subunit composition. When activated by GABA, GABAARs selectively allow the flow of chloride anions across the cell membrane down their electrochemical gradient. Chloride influx into the postsynaptic neuron following GABAAR opening decreases the neuron ability to generate a new action potential, thereby reducing nerve transmission. Beta-containing GABAARs can simultaneously bind GABA and histamine where histamine binds at the interface of two neighboring beta subunits, which may be involved in the regulation of sleep and wakefulness. This Homo sapiens (Human) protein is Gamma-aminobutyric acid receptor subunit beta-1.